We begin with the raw amino-acid sequence, 378 residues long: Probable E3 ubiquitin-protein ligase LUL3 (378 aa).

Residues M1 to H21 are compositionally biased toward basic residues. The interval M1 to Y79 is disordered. G2 is lipidated: N-myristoyl glycine. Pro residues-rich tracts occupy residues D29–Q38 and S55–S72. Residues F164–Q283 form a DAR2 domain region. The RING-type; atypical zinc finger occupies C321–R360.

The protein belongs to the RING-type zinc finger family. LOG2 subfamily. In terms of processing, myristoylated (in vitro).

It carries out the reaction S-ubiquitinyl-[E2 ubiquitin-conjugating enzyme]-L-cysteine + [acceptor protein]-L-lysine = [E2 ubiquitin-conjugating enzyme]-L-cysteine + N(6)-ubiquitinyl-[acceptor protein]-L-lysine.. It participates in protein modification; protein ubiquitination. Acts as an E3 ubiquitin-protein ligase, or as part of E3 complex, which accepts ubiquitin from specific E2 ubiquitin-conjugating enzymes and then transfers it to substrates (in vitro). This is Probable E3 ubiquitin-protein ligase LUL3 (LUL3) from Arabidopsis thaliana (Mouse-ear cress).